A 74-amino-acid polypeptide reads, in one-letter code: Cytochrome c oxidase copper chaperone 1 (74 aa).

The disordered stretch occupies residues 1–30; that stretch reads MTDQPAQNGLIPPPTSEPSKAAASAETKPK. Positions 34 and 35 each coordinate Cu cation. Positions 34–74 constitute a CHCH domain; that stretch reads CCACPDTKKLRDECIVEHGESACTKWIEAHKICLRAEGFNV. 2 short sequence motifs (cx9C motif) span residues 37-47 and 56-66; these read CPDTKKLRDEC and CTKWIEAHKIC. 2 cysteine pairs are disulfide-bonded: Cys-37-Cys-66 and Cys-47-Cys-56.

This sequence belongs to the COX17 family.

It localises to the mitochondrion intermembrane space. Copper chaperone for cytochrome c oxidase (COX). Binds 2 copper ions and delivers them to the Cu(A) site of COX. Can complement the yeast mutant cox17. In Arabidopsis thaliana (Mouse-ear cress), this protein is Cytochrome c oxidase copper chaperone 1 (COX17-1).